Here is a 391-residue protein sequence, read N- to C-terminus: GTPase Obg (391 aa).

An Obg domain is found at 1 to 159 (MKFVDEARIL…RELMLELMLL (159 aa)). An OBG-type G domain is found at 160–333 (ADVGMLGMPN…LCWDIMEFMK (174 aa)). Residues 166-173 (GMPNAGKS), 191-195 (FTTLV), 213-216 (DIPG), 283-286 (NKVD), and 314-316 (SAI) each bind GTP. Positions 173 and 193 each coordinate Mg(2+).

It belongs to the TRAFAC class OBG-HflX-like GTPase superfamily. OBG GTPase family. In terms of assembly, monomer. It depends on Mg(2+) as a cofactor.

The protein resides in the cytoplasm. Functionally, an essential GTPase which binds GTP, GDP and possibly (p)ppGpp with moderate affinity, with high nucleotide exchange rates and a fairly low GTP hydrolysis rate. Plays a role in control of the cell cycle, stress response, ribosome biogenesis and in those bacteria that undergo differentiation, in morphogenesis control. The chain is GTPase Obg from Photorhabdus laumondii subsp. laumondii (strain DSM 15139 / CIP 105565 / TT01) (Photorhabdus luminescens subsp. laumondii).